We begin with the raw amino-acid sequence, 442 residues long: Tubulin beta chain (442 aa).

GTP-binding residues include Gln11, Glu69, Ser138, Gly142, Thr143, Gly144, Asn204, and Asn226. Glu69 is a Mg(2+) binding site.

The protein belongs to the tubulin family. As to quaternary structure, dimer of alpha and beta chains. A typical microtubule is a hollow water-filled tube with an outer diameter of 25 nm and an inner diameter of 15 nM. Alpha-beta heterodimers associate head-to-tail to form protofilaments running lengthwise along the microtubule wall with the beta-tubulin subunit facing the microtubule plus end conferring a structural polarity. Microtubules usually have 13 protofilaments but different protofilament numbers can be found in some organisms and specialized cells. Mg(2+) is required as a cofactor.

It is found in the cytoplasm. The protein resides in the cytoskeleton. Tubulin is the major constituent of microtubules, a cylinder consisting of laterally associated linear protofilaments composed of alpha- and beta-tubulin heterodimers. Microtubules grow by the addition of GTP-tubulin dimers to the microtubule end, where a stabilizing cap forms. Below the cap, tubulin dimers are in GDP-bound state, owing to GTPase activity of alpha-tubulin. The sequence is that of Tubulin beta chain (TUB-B) from Pneumocystis carinii.